The primary structure comprises 1111 residues: Lysylphosphatidylglycerol biosynthesis bifunctional protein LysX (1111 aa).

The interval 1-612 (MTLTSPPRTR…VLHHDGTAPD (612 aa)) is phosphatidylglycerol lysyltransferase. Helical transmembrane passes span 18 to 38 (VPAAAGWTVGVIATLSLIASV), 60 to 80 (FPDTSFAWAFVLALLAGALAA), 84 to 104 (IAWWILLLYMVAAVGWNVADL), 118 to 138 (VIGLAFHLAAVAFLLLARPLF), 152 to 172 (GVLAAGMAVGVLVGWGLLELF), 209 to 229 (VNALLGLFGALALMAAAIVLF), and 308 to 328 (AWLALCGTYGWAPGVMGASVG). The segment at 613–1111 (MSGLRTDTAD…TLPFPLARPR (499 aa)) is lysine--tRNA ligase. The OB DNA-binding region spans 674-747 (VAGRVLRIRD…GTRSLLVRHW (74 aa)). Mg(2+) contacts are provided by Asp-1023 and Glu-1030.

This sequence in the N-terminal section; belongs to the LPG synthetase family. In the C-terminal section; belongs to the class-II aminoacyl-tRNA synthetase family. The cofactor is Mg(2+).

It is found in the cell membrane. The enzyme catalyses tRNA(Lys) + L-lysine + ATP = L-lysyl-tRNA(Lys) + AMP + diphosphate. It catalyses the reaction L-lysyl-tRNA(Lys) + a 1,2-diacyl-sn-glycero-3-phospho-(1'-sn-glycerol) = a 1,2-diacyl-sn-glycero-3-phospho-1'-(3'-O-L-lysyl)-sn-glycerol + tRNA(Lys). Its function is as follows. Catalyzes the production of L-lysyl-tRNA(Lys)transfer and the transfer of a lysyl group from L-lysyl-tRNA(Lys) to membrane-bound phosphatidylglycerol (PG), which produces lysylphosphatidylglycerol (LPG), one of the components of the bacterial membrane with a positive net charge. LPG synthesis contributes to the resistance to cationic antimicrobial peptides (CAMPs) and likely protects M.tuberculosis against the CAMPs produced by competiting microorganisms (bacteriocins). In fact, the modification of anionic phosphatidylglycerol with positively charged L-lysine results in repulsion of the peptides. This Mycobacterium sp. (strain JLS) protein is Lysylphosphatidylglycerol biosynthesis bifunctional protein LysX (lysX).